Consider the following 1354-residue polypeptide: Eukaryotic translation initiation factor 3 subunit A (1354 aa).

The residue at position 68 (Lys-68) is an N6-acetyllysine. A coiled-coil region spans residues 82-120 (NIKSLEDVVRAYLKLAEEKTEAAKEESQQMVLDIEDLDN). A PCI domain is found at 315–498 (MQRMSTRVLL…RTLSFGSDLN (184 aa)). Ser-492 and Ser-584 each carry phosphoserine. An interaction with EIF3B region spans residues 664 to 835 (LDPDFIMAKQ…REERERAERA (172 aa)). 3 disordered regions span residues 809–844 (EKEEEEQRRAEEQMLKEREERERAERAKREEELREY), 866–1249 (EERE…RDRD), and 1262–1354 (DLRD…TVRR). Basic and acidic residues-rich tracts occupy residues 866–1136 (EERE…DDAR), 1148–1249 (GWRE…RDRD), 1262–1302 (DLRD…DPPR), and 1310–1343 (SRERERERDREGEKEKASWRAEKDRESLRRTKNE). Ser-895 is subject to Phosphoserine. A 1; truncated repeat occupies 924-931 (DDERPHRR). The tract at residues 924–1143 (DDERPHRRDE…DARPGPWRPF (220 aa)) is 22 X 10 AA approximate tandem repeats of [DA]-[DE]-[ED]-R-[PLIGFSV]-[RPS]-[RW]-[RL]-[GNIHT]-[DGLPTAM]. Copy 2 of the repeat occupies 932-941 (DEDRLRRLGG). A 3; approximate repeat occupies 942-951 (DDEERESSLR). Ser-949 carries the phosphoserine modification. 18 repeat units span residues 953–962 (DDDRIPRRGL), 963–972 (DDDRGPRRGP), 973–982 (DEDRFSRRGT), 983–992 (DDDRPSWRNA), 993–1002 (DDDRPPRRIG), 1003–1012 (DDDRGSWRHT), 1013–1022 (DDDRPPRRGL), 1023–1032 (DDDRPPRRGL), 1033–1042 (DDERGSWRTA), 1043–1052 (EEDRGPRRGM), 1053–1062 (DDDRGPRRGG), 1064–1073 (DDERSSWRNA), 1074–1083 (DDDRGPRRGM), 1084–1093 (DDDRGPRRGL), 1094–1103 (DDDRGPWRNA), 1104–1113 (AEDRISRRGA), 1114–1123 (DDDRGPWRNM), and 1124–1133 (DDDRVPRRGD). Position 1038 is a phosphoserine (Ser-1038). The stretch at 1134–1143 (DARPGPWRPF) is one 22; approximate repeat. Phosphoserine occurs at positions 1159 and 1233. Phosphoserine occurs at positions 1310 and 1336.

It belongs to the eIF-3 subunit A family. In terms of assembly, component of the eukaryotic translation initiation factor 3 (eIF-3) complex, which is composed of 13 subunits: EIF3A, EIF3B, EIF3C, EIF3D, EIF3E, EIF3F, EIF3G, EIF3H, EIF3I, EIF3J, EIF3K, EIF3L and EIF3M. The eIF-3 complex appears to include 3 stable modules: module A is composed of EIF3A, EIF3B, EIF3G and EIF3I; module B is composed of EIF3F, EIF3H, and EIF3M; and module C is composed of EIF3C, EIF3D, EIF3E, EIF3L and EIF3K. EIF3C of module C binds EIF3B of module A and EIF3H of module B, thereby linking the three modules. EIF3J is a labile subunit that binds to the eIF-3 complex via EIF3B. The eIF-3 complex interacts with RPS6KB1 under conditions of nutrient depletion. Mitogenic stimulation leads to binding and activation of a complex composed of MTOR and RPTOR, leading to phosphorylation and release of RPS6KB1 and binding of EIF4B to eIF-3. Interacts with EIF4G1. Also interacts with KRT7 and PIWIL2. Post-translationally, phosphorylated. Phosphorylation is enhanced upon serum stimulation.

It is found in the cytoplasm. In terms of biological role, RNA-binding component of the eukaryotic translation initiation factor 3 (eIF-3) complex, which is required for several steps in the initiation of protein synthesis. The eIF-3 complex associates with the 40S ribosome and facilitates the recruitment of eIF-1, eIF-1A, eIF-2:GTP:methionyl-tRNAi and eIF-5 to form the 43S pre-initiation complex (43S PIC). The eIF-3 complex stimulates mRNA recruitment to the 43S PIC and scanning of the mRNA for AUG recognition. The eIF-3 complex is also required for disassembly and recycling of post-termination ribosomal complexes and subsequently prevents premature joining of the 40S and 60S ribosomal subunits prior to initiation. The eIF-3 complex specifically targets and initiates translation of a subset of mRNAs involved in cell proliferation, including cell cycling, differentiation and apoptosis, and uses different modes of RNA stem-loop binding to exert either translational activation or repression. The polypeptide is Eukaryotic translation initiation factor 3 subunit A (Eif3a) (Rattus norvegicus (Rat)).